Here is a 377-residue protein sequence, read N- to C-terminus: Putrescine transport ATP-binding protein PotG (377 aa).

In terms of domain architecture, ABC transporter spans 20–250; that stretch reads LEIRNLTKSY…PTTRYSAEFI (231 aa). ATP is bound at residue 52–59; it reads GASGCGKS.

Belongs to the ABC transporter superfamily. The complex is composed of two ATP-binding proteins (PotG), two transmembrane proteins (PotH and PotI) and a solute-binding protein (PotF).

Its subcellular location is the cell inner membrane. The catalysed reaction is putrescine(out) + ATP + H2O = putrescine(in) + ADP + phosphate + H(+). Its activity is regulated as follows. Transport is feedback inhibited by intracellular polyamines. Its function is as follows. Part of the ABC transporter complex PotFGHI involved in putrescine uptake. Responsible for energy coupling to the transport system. Imports putrescine for maintenance of the optimal concentration of polyamines necessary for cell growth in the presence of glucose. The polypeptide is Putrescine transport ATP-binding protein PotG (Escherichia coli (strain K12)).